A 496-amino-acid polypeptide reads, in one-letter code: uncharacterized protein (496 aa).

12 helical membrane passes run 33–53 (FLKG…LIFA), 89–109 (LNFL…YTLI), 127–147 (PWFV…FTFF), 154–174 (VFNL…YEIF), 193–213 (LIIA…TPLV), 247–267 (IILI…NTNF), 285–305 (LWFI…VFAY), 320–340 (LWVY…YMVF), 355–375 (LLNL…VTLF), 382–402 (SLIN…IYIF), 411–431 (LLVL…IVGF), and 455–475 (VQIM…YLTI).

It localises to the cell membrane. This is an uncharacterized protein from Ureaplasma parvum serovar 3 (strain ATCC 700970).